A 301-amino-acid polypeptide reads, in one-letter code: DSC E3 ubiquitin ligase complex subunit B (301 aa).

3 helical membrane-spanning segments follow: residues 9–29 (APITKLLLIYTIASSIALSIL), 52–72 (LATWQLAGFTNSTEALFAAML), and 90–110 (TFIISTLPYTSLLPPLLLVLL). Residues 268–284 (AAAAASGNAGSASEASG) show a composition bias toward low complexity. Residues 268-301 (AAAAASGNAGSASEASGQRQRRREGGIMDRLRAL) form a disordered region. Basic and acidic residues predominate over residues 290–301 (REGGIMDRLRAL).

As to quaternary structure, component of the DSC E3 ubiquitin ligase complex composed of dscA, dscB, dscC and dscD.

It localises to the endoplasmic reticulum membrane. The enzyme catalyses S-ubiquitinyl-[E2 ubiquitin-conjugating enzyme]-L-cysteine + [acceptor protein]-L-lysine = [E2 ubiquitin-conjugating enzyme]-L-cysteine + N(6)-ubiquitinyl-[acceptor protein]-L-lysine.. Its pathway is protein modification; protein ubiquitination. Its function is as follows. Component of the DSC E3 ubiquitin ligase complex which is required for the srbA transcriptional activator proteolytic cleavage to release the soluble transcription factor from the membrane in low oxygen or sterol conditions. Required for growth during hypoxia and triazole drug susceptibility, as well as for virulence in a murine model of invasive pulmonary aspergillosis (IPA). This is DSC E3 ubiquitin ligase complex subunit B from Aspergillus fumigatus (strain ATCC MYA-4609 / CBS 101355 / FGSC A1100 / Af293) (Neosartorya fumigata).